A 276-amino-acid polypeptide reads, in one-letter code: Formamidopyrimidine-DNA glycosylase (276 aa).

Pro-2 (schiff-base intermediate with DNA) is an active-site residue. Glu-3 acts as the Proton donor in catalysis. Lys-58 acts as the Proton donor; for beta-elimination activity in catalysis. DNA is bound by residues His-94, Arg-112, and Arg-157. The segment at Phe-242–Arg-276 adopts an FPG-type zinc-finger fold. The Proton donor; for delta-elimination activity role is filled by Arg-266.

This sequence belongs to the FPG family. Monomer. Zn(2+) is required as a cofactor.

The catalysed reaction is Hydrolysis of DNA containing ring-opened 7-methylguanine residues, releasing 2,6-diamino-4-hydroxy-5-(N-methyl)formamidopyrimidine.. It carries out the reaction 2'-deoxyribonucleotide-(2'-deoxyribose 5'-phosphate)-2'-deoxyribonucleotide-DNA = a 3'-end 2'-deoxyribonucleotide-(2,3-dehydro-2,3-deoxyribose 5'-phosphate)-DNA + a 5'-end 5'-phospho-2'-deoxyribonucleoside-DNA + H(+). In terms of biological role, involved in base excision repair of DNA damaged by oxidation or by mutagenic agents. Acts as a DNA glycosylase that recognizes and removes damaged bases. Has a preference for oxidized purines, such as 7,8-dihydro-8-oxoguanine (8-oxoG). Has AP (apurinic/apyrimidinic) lyase activity and introduces nicks in the DNA strand. Cleaves the DNA backbone by beta-delta elimination to generate a single-strand break at the site of the removed base with both 3'- and 5'-phosphates. The sequence is that of Formamidopyrimidine-DNA glycosylase from Burkholderia thailandensis (strain ATCC 700388 / DSM 13276 / CCUG 48851 / CIP 106301 / E264).